We begin with the raw amino-acid sequence, 507 residues long: Cytochrome P450 52A7 (507 aa).

A helical membrane pass occupies residues Leu-6 to Ile-26. A heme-binding site is contributed by Cys-456.

It belongs to the cytochrome P450 family. Heme serves as cofactor.

The protein localises to the membrane. Together with an NADPH cytochrome P450 the enzyme system catalyzes the terminal hydroxylation as the first step in the assimilation of alkanes and fatty acids. Preferentially hydroxylates lauric acid. The chain is Cytochrome P450 52A7 (CYP52A7) from Candida tropicalis (Yeast).